Here is a 383-residue protein sequence, read N- to C-terminus: Activator of 90 kDa heat shock protein ATPase homolog (383 aa).

2 disordered regions span residues 97 to 126 (KKVL…KPAE) and 209 to 228 (EQSQ…TTTN).

It belongs to the AHA1 family. In terms of assembly, interacts with hspD/HSP90.

The protein resides in the cytoplasm. Functionally, co-chaperone that stimulates hspD/HSP90 ATPase activity. The chain is Activator of 90 kDa heat shock protein ATPase homolog (ahsa) from Dictyostelium discoideum (Social amoeba).